A 336-amino-acid polypeptide reads, in one-letter code: DNA-directed RNA polymerase subunit alpha (336 aa).

Residues 1–232 form an alpha N-terminal domain (alpha-NTD) region; that stretch reads MIQKNWQELI…DQLSVFVNFD (232 aa). The tract at residues 248 to 336 is alpha C-terminal domain (alpha-CTD); it reads FNPALLKKVD…DLAKRYEDQY (89 aa).

This sequence belongs to the RNA polymerase alpha chain family. As to quaternary structure, homodimer. The RNAP catalytic core consists of 2 alpha, 1 beta, 1 beta' and 1 omega subunit. When a sigma factor is associated with the core the holoenzyme is formed, which can initiate transcription.

The enzyme catalyses RNA(n) + a ribonucleoside 5'-triphosphate = RNA(n+1) + diphosphate. DNA-dependent RNA polymerase catalyzes the transcription of DNA into RNA using the four ribonucleoside triphosphates as substrates. The polypeptide is DNA-directed RNA polymerase subunit alpha (Sinorhizobium fredii (strain NBRC 101917 / NGR234)).